The chain runs to 362 residues: Beta-ketoacyl-[acyl-carrier-protein] synthase III 2 (362 aa).

Residues Cys113 and His251 contribute to the active site. The ACP-binding stretch occupies residues 252-256; it reads QANIR. The active site involves Asn281.

The protein belongs to the thiolase-like superfamily. FabH family. In terms of assembly, homodimer.

The protein localises to the cytoplasm. It catalyses the reaction malonyl-[ACP] + acetyl-CoA + H(+) = 3-oxobutanoyl-[ACP] + CO2 + CoA. It functions in the pathway lipid metabolism; fatty acid biosynthesis. Its function is as follows. Catalyzes the condensation reaction of fatty acid synthesis by the addition to an acyl acceptor of two carbons from malonyl-ACP. Catalyzes the first condensation reaction which initiates fatty acid synthesis and may therefore play a role in governing the total rate of fatty acid production. Possesses both acetoacetyl-ACP synthase and acetyl transacylase activities. Its substrate specificity determines the biosynthesis of branched-chain and/or straight-chain of fatty acids. In Vibrio vulnificus (strain CMCP6), this protein is Beta-ketoacyl-[acyl-carrier-protein] synthase III 2.